A 159-amino-acid polypeptide reads, in one-letter code: Phosphopantetheine adenylyltransferase (159 aa).

Threonine 10 is a substrate binding site. ATP-binding positions include 10 to 11 and histidine 18; that span reads TF. 3 residues coordinate substrate: lysine 42, methionine 74, and arginine 88. ATP contacts are provided by residues 89-91, glutamate 99, and 124-130; these read GLR and WSFISSS.

It belongs to the bacterial CoaD family. As to quaternary structure, homohexamer. The cofactor is Mg(2+).

Its subcellular location is the cytoplasm. The enzyme catalyses (R)-4'-phosphopantetheine + ATP + H(+) = 3'-dephospho-CoA + diphosphate. It functions in the pathway cofactor biosynthesis; coenzyme A biosynthesis; CoA from (R)-pantothenate: step 4/5. Reversibly transfers an adenylyl group from ATP to 4'-phosphopantetheine, yielding dephospho-CoA (dPCoA) and pyrophosphate. This Yersinia pseudotuberculosis serotype I (strain IP32953) protein is Phosphopantetheine adenylyltransferase.